The following is an 85-amino-acid chain: Small ribosomal subunit protein uS17 (85 aa).

The protein belongs to the universal ribosomal protein uS17 family. Part of the 30S ribosomal subunit.

In terms of biological role, one of the primary rRNA binding proteins, it binds specifically to the 5'-end of 16S ribosomal RNA. The polypeptide is Small ribosomal subunit protein uS17 (Mycoplasma pneumoniae (strain ATCC 29342 / M129 / Subtype 1) (Mycoplasmoides pneumoniae)).